The following is a 599-amino-acid chain: Elongation factor 4 (599 aa).

The 183-residue stretch at S4–K186 folds into the tr-type G domain. Residues D16–T21 and N133–D136 each bind GTP.

Belongs to the TRAFAC class translation factor GTPase superfamily. Classic translation factor GTPase family. LepA subfamily.

It localises to the cell inner membrane. The catalysed reaction is GTP + H2O = GDP + phosphate + H(+). Required for accurate and efficient protein synthesis under certain stress conditions. May act as a fidelity factor of the translation reaction, by catalyzing a one-codon backward translocation of tRNAs on improperly translocated ribosomes. Back-translocation proceeds from a post-translocation (POST) complex to a pre-translocation (PRE) complex, thus giving elongation factor G a second chance to translocate the tRNAs correctly. Binds to ribosomes in a GTP-dependent manner. The sequence is that of Elongation factor 4 from Syntrophotalea carbinolica (strain DSM 2380 / NBRC 103641 / GraBd1) (Pelobacter carbinolicus).